Consider the following 688-residue polypeptide: NADPH-dependent diflavin oxidoreductase 1 (688 aa).

The interval H26–A76 is disordered. The segment covering T33–G58 has biased composition (polar residues). The span at E59–H68 shows a compositional bias: basic and acidic residues. One can recognise a Flavodoxin-like domain in the interval I82–C227. Residues T88–A93, S136–G139, L174–N183, and D209 contribute to the FMN site. An FAD-binding FR-type domain is found at K277 to D543. Residues R453, R483–S486, and G515–T518 each bind FAD. NADP(+) is bound by residues T554, S607–R608, and G613–Q617. Residue W688 participates in FAD binding.

It belongs to the NADPH-dependent diflavin oxidoreductase NDOR1 family. In the N-terminal section; belongs to the flavodoxin family. This sequence in the C-terminal section; belongs to the flavoprotein pyridine nucleotide cytochrome reductase family. Interacts with DRE2; as part of the cytosolic iron-sulfur (Fe-S) protein assembly (CIA) machinery. The cofactor is FAD. FMN is required as a cofactor.

It localises to the cytoplasm. The protein localises to the mitochondrion. The enzyme catalyses 2 oxidized [2Fe-2S]-[protein] + NADPH = 2 reduced [2Fe-2S]-[protein] + NADP(+) + H(+). Its function is as follows. NADPH-dependent reductase which is a central component of the cytosolic iron-sulfur (Fe-S) protein assembly (CIA) machinery. Transfers electrons from NADPH via its FAD and FMN prosthetic groups to the [2Fe-2S] cluster of DRE2, another key component of the CIA machinery. In turn, this reduced cluster provides electrons for assembly of cytosolic iron-sulfur cluster proteins. Positively controls H(2)O(2)-induced cell death. The sequence is that of NADPH-dependent diflavin oxidoreductase 1 from Yarrowia lipolytica (strain CLIB 122 / E 150) (Yeast).